The sequence spans 393 residues: NAD(P)H-quinone oxidoreductase subunit H, chloroplastic (393 aa).

The protein belongs to the complex I 49 kDa subunit family. In terms of assembly, NDH is composed of at least 16 different subunits, 5 of which are encoded in the nucleus.

The protein resides in the plastid. Its subcellular location is the chloroplast thylakoid membrane. It catalyses the reaction a plastoquinone + NADH + (n+1) H(+)(in) = a plastoquinol + NAD(+) + n H(+)(out). The enzyme catalyses a plastoquinone + NADPH + (n+1) H(+)(in) = a plastoquinol + NADP(+) + n H(+)(out). Its function is as follows. NDH shuttles electrons from NAD(P)H:plastoquinone, via FMN and iron-sulfur (Fe-S) centers, to quinones in the photosynthetic chain and possibly in a chloroplast respiratory chain. The immediate electron acceptor for the enzyme in this species is believed to be plastoquinone. Couples the redox reaction to proton translocation, and thus conserves the redox energy in a proton gradient. The sequence is that of NAD(P)H-quinone oxidoreductase subunit H, chloroplastic from Lolium perenne (Perennial ryegrass).